The sequence spans 236 residues: MICOS complex subunit MIC25 (236 aa).

A compositionally biased stretch (basic and acidic residues) spans 1 to 11; the sequence is MGSAESREGRR. The disordered stretch occupies residues 1–22; the sequence is MGSAESREGRRASFGMDEEERV. Residue glycine 2 is the site of N-myristoyl glycine attachment. Serine 13 and serine 31 each carry phosphoserine. Disordered stretches follow at residues 34–86 and 109–132; these read VVNR…VQVD and EREA…DQEK. Residues 48–58 show a composition bias toward low complexity; the sequence is GLLAPPAAALG. Basic and acidic residues-rich tracts occupy residues 62 to 71 and 122 to 132; these read GREKDSKPPR and RRGEGGVDQEK. A coiled-coil region spans residues 127 to 167; it reads GVDQEKQRLAQRARELESQEEELRCRDAFYKEQLGRLERQN. The CHCH domain occupies 195–236; that stretch reads EPVCSGLQAQILRCYRDRLQEVLLCADLVRAYQHCVSSAHKG. 2 short sequence motifs (cx9C motif) span residues 198–208 and 219–229; these read CSGLQAQILRC and CADLVRAYQHC. 2 disulfide bridges follow: cysteine 198/cysteine 229 and cysteine 208/cysteine 219.

The protein belongs to the MICOS complex subunit Mic19 family. Metazoan Mic25 subfamily. In terms of assembly, component of the mitochondrial contact site and cristae organizing system (MICOS) complex, composed of at least MICOS10/MIC10, CHCHD3/MIC19, CHCHD6/MIC25, APOOL/MIC27, IMMT/MIC60, APOO/MIC23/MIC26 and MICOS13/MIC13. This complex was also known under the names MINOS or MitOS complex. The MICOS complex associates with mitochondrial outer membrane proteins SAMM50, MTX1 and MTX2 (together described as components of the mitochondrial outer membrane sorting assembly machinery (SAM) complex) and DNAJC11, mitochondrial inner membrane protein TMEM11 and with HSPA9. The MICOS and SAM complexes together with DNAJC11 are part of a large protein complex spanning both membranes termed the mitochondrial intermembrane space bridging (MIB) complex. Interacts with DISC1. Interacts with IMMT/MIC60.

Its subcellular location is the mitochondrion inner membrane. The protein localises to the mitochondrion. Component of the MICOS complex, a large protein complex of the mitochondrial inner membrane that plays crucial roles in the maintenance of crista junctions, inner membrane architecture, and formation of contact sites to the outer membrane. This is MICOS complex subunit MIC25 (CHCHD6) from Bos taurus (Bovine).